Reading from the N-terminus, the 405-residue chain is DNA primase DnaG (405 aa).

The 77-residue stretch at 172-248 folds into the Toprim domain; it reads DSIIVVEGRA…HIDYIARAPP (77 aa). Residues E178, D222, and D224 each coordinate Mg(2+). A disordered region spans residues 279–302; the sequence is AAGEKTESQMSPQQPQLTQTQPTT. A compositionally biased stretch (low complexity) spans 290–302; the sequence is PQQPQLTQTQPTT.

This sequence belongs to the archaeal DnaG primase family. As to quaternary structure, forms a ternary complex with MCM helicase and DNA. Component of the archaeal exosome complex. Mg(2+) is required as a cofactor.

It carries out the reaction ssDNA + n NTP = ssDNA/pppN(pN)n-1 hybrid + (n-1) diphosphate.. RNA polymerase that catalyzes the synthesis of short RNA molecules used as primers for DNA polymerase during DNA replication. Also part of the exosome, which is a complex involved in RNA degradation. Acts as a poly(A)-binding protein that enhances the interaction between heteromeric, adenine-rich transcripts and the exosome. The sequence is that of DNA primase DnaG from Pyrobaculum islandicum (strain DSM 4184 / JCM 9189 / GEO3).